The chain runs to 404 residues: Corticosteroid-binding globulin (404 aa).

An N-terminal signal peptide occupies residues 1–30 (MAWSTRTMMSLALYTCFLWLLTSGLKTVQS). N-linked (GlcNAc...) asparagine glycans are attached at residues Asn-95 and Asn-225. Gln-253 serves as a coordination point for cortisol. The N-linked (GlcNAc...) asparagine glycan is linked to Asn-259. Glu-285 provides a ligand contact to cortisol. N-linked (GlcNAc...) asparagine glycosylation is present at Asn-326. Trp-392 is a binding site for cortisol.

This sequence belongs to the serpin family. In terms of tissue distribution, expressed by the liver; secreted in plasma.

It localises to the secreted. Its function is as follows. Major transport protein for glucocorticoids and progestins in the blood of almost all vertebrate species. This is Corticosteroid-binding globulin (SERPINA6) from Mesocricetus auratus (Golden hamster).